The chain runs to 670 residues: tRNA 5-methylaminomethyl-2-thiouridine biosynthesis bifunctional protein MnmC (670 aa).

Positions 1–245 are tRNA (mnm(5)s(2)U34)-methyltransferase; sequence MKPIAIQPAS…KREMLTGALS (245 aa). Residues 271-670 form an FAD-dependent cmnm(5)s(2)U34 oxidoreductase region; that stretch reads VGGGIASALL…RKLLKGRAAS (400 aa).

This sequence in the N-terminal section; belongs to the methyltransferase superfamily. tRNA (mnm(5)s(2)U34)-methyltransferase family. The protein in the C-terminal section; belongs to the DAO family. The cofactor is FAD.

The protein localises to the cytoplasm. The catalysed reaction is 5-aminomethyl-2-thiouridine(34) in tRNA + S-adenosyl-L-methionine = 5-methylaminomethyl-2-thiouridine(34) in tRNA + S-adenosyl-L-homocysteine + H(+). Functionally, catalyzes the last two steps in the biosynthesis of 5-methylaminomethyl-2-thiouridine (mnm(5)s(2)U) at the wobble position (U34) in tRNA. Catalyzes the FAD-dependent demodification of cmnm(5)s(2)U34 to nm(5)s(2)U34, followed by the transfer of a methyl group from S-adenosyl-L-methionine to nm(5)s(2)U34, to form mnm(5)s(2)U34. The polypeptide is tRNA 5-methylaminomethyl-2-thiouridine biosynthesis bifunctional protein MnmC (Cronobacter sakazakii (strain ATCC BAA-894) (Enterobacter sakazakii)).